Reading from the N-terminus, the 388-residue chain is D-xylose dehydrogenase (388 aa).

This sequence belongs to the Gfo/Idh/MocA family. Homotetramer. It depends on Zn(2+) as a cofactor.

The enzyme catalyses D-xylose + NADP(+) = D-xylono-1,5-lactone + NADPH + H(+). It carries out the reaction D-xylose + NAD(+) = D-xylono-1,5-lactone + NADH + H(+). It functions in the pathway carbohydrate metabolism; D-xylose degradation. In terms of biological role, catalyzes the NADP(+)-dependent oxidation of D-xylose. Is able to use both NADP(+) and NAD(+); however, the enzyme shows a very strong preference for NADP(+). Is likely involved in the first step of the oxidative D-xylose degradation pathway. In Paenarthrobacter nicotinovorans (Arthrobacter nicotinovorans), this protein is D-xylose dehydrogenase (xdh).